A 336-amino-acid chain; its full sequence is Flavonoid 4'-O-methyltransferase 5 (336 aa).

The S-adenosyl-L-methionine site is built by Tyr140 and Asp203. Residue His241 is the Proton acceptor of the active site.

It belongs to the class I-like SAM-binding methyltransferase superfamily. Cation-independent O-methyltransferase family. Homodimer. As to expression, expressed in leaves.

The enzyme catalyses genkwanin + S-adenosyl-L-methionine = apigenin 4',7-dimethyl ether + S-adenosyl-L-homocysteine. It catalyses the reaction cirsiliol + S-adenosyl-L-methionine = eupatorin + S-adenosyl-L-homocysteine + H(+). It carries out the reaction cirsimaritin + S-adenosyl-L-methionine = salvigenin + S-adenosyl-L-homocysteine + H(+). The catalysed reaction is scutellarein 7-methyl ether + S-adenosyl-L-methionine = ladanein + S-adenosyl-L-homocysteine + H(+). The enzyme catalyses (2S)-sakuranetin + S-adenosyl-L-methionine = (2S)-naringenin 4',7-dimethyl ether + S-adenosyl-L-homocysteine + H(+). It participates in flavonoid metabolism. Substrate inhibition by genkwanin (GENK) at concentrations above 10 mM. Functionally, flavonoid 4'-O-methyltransferase involved in the biosynthesis of polymethoxylated flavonoids natural products such as nevadensin and salvigenin, aroma compounds which contribute to the flavor of sweet basil, and exhibit pharmacological activities such as anti-allergic, anti-oxidant, antibacterial, anti-proliferative, and anti-inflammatory effects. Catalyzes S-adenosylmethionine-dependent regioselective 4'-O-methylation of flavonoids; active on various hydroxylated flavonoid substrates, including scutellarein-7-methyl ether (SCU7Me) and, with a lower efficiency, cirsimaritin (CIRM), sakuranetin (NAR7Me), ladanein (LAD) and genkwanin (GENK). The protein is Flavonoid 4'-O-methyltransferase 5 of Ocimum basilicum (Sweet basil).